A 292-amino-acid chain; its full sequence is MHFMKKYLLPILVLFLAYYYYSTKEEFRPEMLQGKKVIVTGASKGIGREMAYHLSEMGAHVVLTARSEEGLQKVASRCLELGAASAHYIAGTMEDMTFAEQFVLKAGKLMGGLDMLILNHITYTSMNFFRDEIHALRKAMEVNFISYVVMSVAALPMLKQSNGSIVVVSSIAGKMAHPLVASYSASKFALDGFFSSLRREHGVTNVNVSITLCVLGLINTETAMKATSGVFNAPASPKEECALEIIKGGALRQEEVYYDSWSWTPILLGNPGRKIMEFLSMKSFTFDKLISS.

Topologically, residues 2-7 (HFMKKY) are cytoplasmic. A helical; Signal-anchor for type II membrane protein membrane pass occupies residues 8–24 (LLPILVLFLAYYYYSTK). Residues 25–292 (EEFRPEMLQG…SFTFDKLISS (268 aa)) are Lumenal-facing. NADP(+)-binding positions include 41–67 (GASKGIGREMAYHLSEMGAHVVLTARS), 92–93 (TM), and 119–121 (NHI). The N-linked (GlcNAc...) asparagine glycan is linked to Asn-162. Residue Ser-170 participates in substrate binding. The active-site Proton acceptor is Tyr-183. Residue 183-187 (YSASK) participates in NADP(+) binding. N-linked (GlcNAc...) asparagine glycosylation is present at Asn-207. An NADP(+)-binding site is contributed by 218-222 (INTET).

Belongs to the short-chain dehydrogenases/reductases (SDR) family. As to quaternary structure, homodimer. As to expression, detected in adrenal gland, liver, kidney, testis, and at lower levels in brain and lung (at protein level).

It is found in the endoplasmic reticulum membrane. The catalysed reaction is an 11beta-hydroxysteroid + NADP(+) = an 11-oxosteroid + NADPH + H(+). It catalyses the reaction corticosterone + NADP(+) = 11-dehydrocorticosterone + NADPH + H(+). The enzyme catalyses a 7beta-hydroxysteroid + NADP(+) = a 7-oxosteroid + NADPH + H(+). It carries out the reaction 7-oxocholesterol + NADPH + H(+) = 7beta-hydroxycholesterol + NADP(+). The catalysed reaction is 7-oxocholesterol + NADPH + H(+) = 7alpha-hydroxycholesterol + NADP(+). It catalyses the reaction chenodeoxycholate + NADP(+) = 7-oxolithocholate + NADPH + H(+). The enzyme catalyses 7-oxolithocholate + NADPH + H(+) = ursodeoxycholate + NADP(+). It carries out the reaction glycochenodeoxycholate + NADP(+) = 7-oxoglycolithocholate + NADPH + H(+). The catalysed reaction is taurochenodeoxycholate + NADP(+) = 7-oxotaurolithocholate + NADPH + H(+). It catalyses the reaction tauroursodeoxycholate + NADP(+) = 7-oxotaurolithocholate + NADPH + H(+). The enzyme catalyses glycoursodeoxycholate + NADP(+) = 7-oxoglycolithocholate + NADPH + H(+). It carries out the reaction 7-oxopregnenolone + NADPH + H(+) = 7beta-hydroxypregnenolone + NADP(+). The catalysed reaction is 3beta,7alpha-dihydroxyandrost-5-en-17-one + NADP(+) = 3beta-hydroxy-5-androstene-7,17-dione + NADPH + H(+). It catalyses the reaction 3beta-hydroxy-5-androstene-7,17-dione + NADPH + H(+) = 3beta,7beta-dihydroxyandrost-5-en-17-one + NADP(+). The enzyme catalyses 3beta-hydroxy-5alpha-androstane-7,17-dione + NADPH + H(+) = 3beta,7beta-dihydroxy-5alpha-androstan-17-one + NADP(+). Its pathway is steroid metabolism. Functionally, controls the reversible conversion of biologically active glucocorticoids such as 11-dehydrocorticosterone to corticosterone in the presence of NADP(H). Participates in the corticosteroid receptor-mediated anti-inflammatory response, as well as metabolic and homeostatic processes. Bidirectional in vitro, predominantly functions as a reductase in vivo, thereby increasing the concentration of active glucocorticoids. It has broad substrate specificity, besides glucocorticoids, it accepts other steroid and sterol substrates. Interconverts 7-oxo- and 7-hydroxy-neurosteroids such as 7-oxopregnenolone and 7beta-hydroxypregnenolone, 7-oxodehydroepiandrosterone (3beta-hydroxy-5-androstene-7,17-dione) and 7beta-hydroxydehydroepiandrosterone (3beta,7beta-dihydroxyandrost-5-en-17-one), among others. Catalyzes reversibly the conversion of the major dietary oxysterol, 7-ketocholesterol (7-oxocholesterol), into the more polar 7-beta-hydroxycholesterol and 7-alpha-hhydroxycholesterol metabolites. 7-oxocholesterol is one of the most important oxysterols, it participates in several events such as induction of apoptosis, accumulation in atherosclerotic lesions, lipid peroxidation, and induction of foam cell formation. Mediates the 7-oxo reduction of 7-oxolithocholate mainly to chenodeoxycholate, and to a lesser extent to ursodeoxycholate, both in its free form and when conjugated to glycine or taurine, providing a link between glucocorticoid activation and bile acid metabolism. Catalyzes the synthesis of 7-beta-25-dihydroxycholesterol from 7-oxo-25-hydroxycholesterol in vitro, which acts as a ligand for the G-protein-coupled receptor (GPCR) Epstein-Barr virus-induced gene 2 (EBI2) and may thereby regulate immune cell migration. This is 11-beta-hydroxysteroid dehydrogenase 1 (HSD11B1) from Mesocricetus auratus (Golden hamster).